Here is a 442-residue protein sequence, read N- to C-terminus: UDP-N-acetylmuramate--L-alanine ligase (442 aa).

109-115 (GAHGKTS) is a binding site for ATP.

This sequence belongs to the MurCDEF family.

It localises to the cytoplasm. The catalysed reaction is UDP-N-acetyl-alpha-D-muramate + L-alanine + ATP = UDP-N-acetyl-alpha-D-muramoyl-L-alanine + ADP + phosphate + H(+). Its pathway is cell wall biogenesis; peptidoglycan biosynthesis. Functionally, cell wall formation. The sequence is that of UDP-N-acetylmuramate--L-alanine ligase from Streptococcus pyogenes serotype M2 (strain MGAS10270).